A 416-amino-acid chain; its full sequence is Multifunctional CCA protein (416 aa).

Residues glycine 8 and arginine 11 each coordinate ATP. Residues glycine 8 and arginine 11 each coordinate CTP. Residues aspartate 21 and aspartate 23 each coordinate Mg(2+). Positions 91, 137, and 140 each coordinate ATP. Arginine 91, arginine 137, and arginine 140 together coordinate CTP. In terms of domain architecture, HD spans 228 to 329 (TGVHTLMVLA…VKIFDKADFW (102 aa)).

Belongs to the tRNA nucleotidyltransferase/poly(A) polymerase family. Bacterial CCA-adding enzyme type 1 subfamily. As to quaternary structure, monomer. Can also form homodimers and oligomers. Mg(2+) is required as a cofactor. Requires Ni(2+) as cofactor.

The catalysed reaction is a tRNA precursor + 2 CTP + ATP = a tRNA with a 3' CCA end + 3 diphosphate. It carries out the reaction a tRNA with a 3' CCA end + 2 CTP + ATP = a tRNA with a 3' CCACCA end + 3 diphosphate. Functionally, catalyzes the addition and repair of the essential 3'-terminal CCA sequence in tRNAs without using a nucleic acid template. Adds these three nucleotides in the order of C, C, and A to the tRNA nucleotide-73, using CTP and ATP as substrates and producing inorganic pyrophosphate. tRNA 3'-terminal CCA addition is required both for tRNA processing and repair. Also involved in tRNA surveillance by mediating tandem CCA addition to generate a CCACCA at the 3' terminus of unstable tRNAs. While stable tRNAs receive only 3'-terminal CCA, unstable tRNAs are marked with CCACCA and rapidly degraded. The sequence is that of Multifunctional CCA protein from Shewanella baltica (strain OS185).